Here is a 424-residue protein sequence, read N- to C-terminus: Histidine--tRNA ligase (424 aa).

It belongs to the class-II aminoacyl-tRNA synthetase family. Homodimer.

It is found in the cytoplasm. The catalysed reaction is tRNA(His) + L-histidine + ATP = L-histidyl-tRNA(His) + AMP + diphosphate + H(+). The protein is Histidine--tRNA ligase of Shewanella frigidimarina (strain NCIMB 400).